A 697-amino-acid polypeptide reads, in one-letter code: Elongation factor G 2 (697 aa).

The 276-residue stretch at 5-280 (SKYRNIGIFA…AVVDYLPAPD (276 aa)) folds into the tr-type G domain. GTP-binding positions include 14-21 (AHVDAGKT), 78-82 (DTPGH), and 132-135 (NKLD).

The protein belongs to the TRAFAC class translation factor GTPase superfamily. Classic translation factor GTPase family. EF-G/EF-2 subfamily.

The protein localises to the cytoplasm. In terms of biological role, catalyzes the GTP-dependent ribosomal translocation step during translation elongation. During this step, the ribosome changes from the pre-translocational (PRE) to the post-translocational (POST) state as the newly formed A-site-bound peptidyl-tRNA and P-site-bound deacylated tRNA move to the P and E sites, respectively. Catalyzes the coordinated movement of the two tRNA molecules, the mRNA and conformational changes in the ribosome. This chain is Elongation factor G 2, found in Shewanella denitrificans (strain OS217 / ATCC BAA-1090 / DSM 15013).